Reading from the N-terminus, the 822-residue chain is Adhesion G protein-coupled receptor E2 (822 aa).

An N-terminal signal peptide occupies residues 1–18 (MGGRVFLAFCVWLTLLGA). Residues 19–530 (ETQDSRDCAR…DVQEEDPVLT (512 aa)) lie on the Extracellular side of the membrane. Positions 22-63 (DSRDCARWCPENSSCVNATACRCNPGFSSSSEIFTSPTEICD) constitute an EGF-like 1 domain. 5 disulfides stabilise this stretch: cysteine 26–cysteine 36, cysteine 30–cysteine 42, cysteine 44–cysteine 62, cysteine 68–cysteine 82, and cysteine 76–cysteine 91. N-linked (GlcNAc...) asparagine glycosylation is found at asparagine 33 and asparagine 38. Residues 64–103 (DINECVPPSKVSCGKSSDCRNTEGSYDCVCNPGYELVSGA) form the EGF-like 1; calcium-binding domain. Residue asparagine 108 is glycosylated (N-linked (GlcNAc...) asparagine). The 44-residue stretch at 116–159 (DVDECQQNPRLCKSYGTCVNTLGSFTCQCLPGFKFKPEDPKLCT) folds into the EGF-like 2; calcium-binding domain. 5 cysteine pairs are disulfide-bonded: cysteine 120–cysteine 133, cysteine 127–cysteine 142, cysteine 144–cysteine 158, cysteine 164–cysteine 177, and cysteine 171–cysteine 186. Residues 160–198 (DVNECTSGQNPCHSSTHCLNNVGSYQCRCRPGWQPIPGS) enclose the EGF-like 3; calcium-binding domain. Asparagine 203, asparagine 222, asparagine 351, asparagine 371, asparagine 427, asparagine 449, and asparagine 453 each carry an N-linked (GlcNAc...) asparagine glycan. Residues 209–247 (DVDECSSGLHQCDNSTVCFNTVGSYTCRCRPGWEPKHGI) enclose the EGF-like 4; calcium-binding domain. Intrachain disulfides connect cysteine 213-cysteine 226 and cysteine 220-cysteine 235. One can recognise a GAIN-B domain in the interval 351 to 523 (NFSYPAGTEF…AVLMAPYDVQ (173 aa)). 2 disulfide bridges follow: cysteine 475-cysteine 505 and cysteine 493-cysteine 507. The tract at residues 475–523 (CVFWEHGQNGCGHWATTGCSTMDTRDTSTICRCTHLSSFAVLMAPYDVQ) is GPS. Residues 531 to 551 (VITYMGLSLSLLCLLLAALTF) form a helical membrane-spanning segment. Topologically, residues 552-562 (LLCKAIQNIST) are cytoplasmic. Residues 563–583 (SLHLQLSLCLLLAHLLFLVAI) traverse the membrane as a helical segment. The Extracellular portion of the chain corresponds to 584 to 589 (DRTEHE). Residues 590-610 (VLCAIIASALHYLYLAAFTWM) form a helical membrane-spanning segment. Over 611-637 (LLEALYLFLTARNLMVVNYSSINRFTK) the chain is Cytoplasmic. Residues 638-658 (KLMFPVAYGVPAVTVAISAAS) traverse the membrane as a helical segment. Residues 659–676 (RPHLYGTPSRCWLQPEKG) lie on the Extracellular side of the membrane. The helical transmembrane segment at 677-697 (FIWGFLGPVCAIFSVNLALLL) threads the bilayer. Over 698 to 728 (VTLWILKNRLSSLNNEVSTLQNTRMLAFKAT) the chain is Cytoplasmic. The helical transmembrane segment at 729–749 (AQLFILGCTWCLGILQVGPAA) threads the bilayer. Topologically, residues 750 to 753 (RVMA) are extracellular. Residues 754–774 (YLFTIINSLQGVFIFLVYCLL) form a helical membrane-spanning segment. The Cytoplasmic segment spans residues 775 to 822 (SQQVREQYRKWSKGFRKLRTESEMHTLSSSAKRDTPKPSTPGLLGLQS). The interval 797–822 (EMHTLSSSAKRDTPKPSTPGLLGLQS) is disordered.

This sequence belongs to the G-protein coupled receptor 2 family. Adhesion G-protein coupled receptor (ADGR) subfamily. As to quaternary structure, forms a heterodimer, consisting of a large extracellular region non-covalently linked to a seven-transmembrane moiety. Interacts with chondroitin sulfate; the interaction with chondroitin sulfate is calcium-dependent. Interacts with CD55. Post-translationally, autoproteolytically cleaved into 2 subunits, an extracellular alpha subunit and a seven-transmembrane beta subunit.

It is found in the cell membrane. Its subcellular location is the cell projection. The protein localises to the ruffle membrane. Cell surface receptor that binds to the chondroitin sulfate moiety of glycosaminoglycan chains and promotes cell attachment. Promotes granulocyte chemotaxis, degranulation and adhesion. In macrophages, promotes the release of inflammatory cytokines, including IL8 and TNF. Signals probably through G-proteins. The protein is Adhesion G protein-coupled receptor E2 (ADGRE2) of Macaca mulatta (Rhesus macaque).